Consider the following 488-residue polypeptide: 3-octaprenyl-4-hydroxybenzoate carboxy-lyase (488 aa).

Residue Asn-172 coordinates Mn(2+). Prenylated FMN-binding positions include 175–177 (IYR), 189–191 (RWL), and 194–195 (RG). Glu-238 lines the Mn(2+) pocket. Asp-287 serves as the catalytic Proton donor.

This sequence belongs to the UbiD family. In terms of assembly, homohexamer. Prenylated FMN serves as cofactor. It depends on Mn(2+) as a cofactor.

The protein localises to the cell membrane. It catalyses the reaction a 4-hydroxy-3-(all-trans-polyprenyl)benzoate + H(+) = a 2-(all-trans-polyprenyl)phenol + CO2. It functions in the pathway cofactor biosynthesis; ubiquinone biosynthesis. In terms of biological role, catalyzes the decarboxylation of 3-octaprenyl-4-hydroxy benzoate to 2-octaprenylphenol, an intermediate step in ubiquinone biosynthesis. This is 3-octaprenyl-4-hydroxybenzoate carboxy-lyase from Legionella pneumophila (strain Lens).